The primary structure comprises 351 residues: Anthranilate phosphoribosyltransferase (351 aa).

5-phospho-alpha-D-ribose 1-diphosphate is bound by residues G80, 83–84 (GD), T88, 90–93 (NIST), 108–116 (KHGNRSVTS), and S120. G80 contributes to the anthranilate binding site. S92 lines the Mg(2+) pocket. N111 is a binding site for anthranilate. R166 serves as a coordination point for anthranilate. Mg(2+) contacts are provided by D229 and E230.

The protein belongs to the anthranilate phosphoribosyltransferase family. As to quaternary structure, homodimer. Mg(2+) serves as cofactor.

It carries out the reaction N-(5-phospho-beta-D-ribosyl)anthranilate + diphosphate = 5-phospho-alpha-D-ribose 1-diphosphate + anthranilate. It participates in amino-acid biosynthesis; L-tryptophan biosynthesis; L-tryptophan from chorismate: step 2/5. Functionally, catalyzes the transfer of the phosphoribosyl group of 5-phosphorylribose-1-pyrophosphate (PRPP) to anthranilate to yield N-(5'-phosphoribosyl)-anthranilate (PRA). In Chlorobium phaeovibrioides (strain DSM 265 / 1930) (Prosthecochloris vibrioformis (strain DSM 265)), this protein is Anthranilate phosphoribosyltransferase.